The primary structure comprises 570 residues: Repressible high-affinity phosphate permease (570 aa).

At 1 to 61 the chain is on the cytoplasmic side; it reads MSTPQKTAGG…AVAGVGFFTD (61 aa). Residues 62-82 traverse the membrane as a helical segment; it reads SYDIFTVSLLTLMLGIVYFPG. Over 83–95 the chain is Extracellular; that stretch reads EGKMPTTSDTAIK. Residues 96–116 form a helical membrane-spanning segment; the sequence is LATSAGTVIGQVGFGAAADVF. The Cytoplasmic portion of the chain corresponds to 117-120; that stretch reads GRKS. Residues 121–141 traverse the membrane as a helical segment; sequence MYGLELLFIIFATLAQALASG. Topologically, residues 142-143 are extracellular; that stretch reads SP. The helical transmembrane segment at 144-164 threads the bilayer; that stretch reads SINIIGIIIFWRVLMGVGIGG. Over 165–186 the chain is Cytoplasmic; it reads DYPLSSIITSEFATTKWRGAMM. A helical transmembrane segment spans residues 187–207; that stretch reads GAVFAMQGLGQLAAAFVMLFV. The Extracellular portion of the chain corresponds to 208–237; it reads TLGFKKSLEAAPTLASCTGDCAVAVDKMWR. Residues 238-258 traverse the membrane as a helical segment; sequence TVIGVGAVPGCIALYYRLTIP. Residues 259–325 lie on the Cytoplasmic side of the membrane; sequence ETPRYTFDVK…FFRHYSKRKN (67 aa). A helical transmembrane segment spans residues 326-346; the sequence is AMLLAGTALSWCFLDIAYYGV. At 347–374 the chain is on the extracellular side; that stretch reads SLNNATILNVIGYSTTGAKNTYEILYNT. Residues 375-395 traverse the membrane as a helical segment; the sequence is AVGNLIIVLAGAVPGYWVTVF. Residues 396–403 lie on the Cytoplasmic side of the membrane; the sequence is TVDTVGRK. The chain crosses the membrane as a helical span at residues 404-424; sequence PIQFMGFGILTILFVVMGFAY. Residues 425-433 are Extracellular-facing; it reads KHLSPHALL. Residues 434–454 traverse the membrane as a helical segment; that stretch reads AIFVLAQFFFNFGPNATTFIV. Residues 455–468 are Cytoplasmic-facing; it reads PGEVFPTRYRSTSH. Residues 469–489 form a helical membrane-spanning segment; sequence GLSAAMGKIGSIIGQGAIAPL. The Extracellular segment spans residues 490 to 505; the sequence is RTRGAVKGGNPNPWMN. A helical transmembrane segment spans residues 506–526; it reads HVLEIYALFMLLGVGTTFLIP. At 527 to 570 the chain is on the cytoplasmic side; the sequence is ETKRKTLEELSGEFDMSGEEEAQRDTTLTEHKTEAPTSSAAVNA. Positions 537–546 are enriched in acidic residues; the sequence is SGEFDMSGEE. Residues 537–570 form a disordered region; sequence SGEFDMSGEEEAQRDTTLTEHKTEAPTSSAAVNA. Residues 547–560 show a composition bias toward basic and acidic residues; it reads EAQRDTTLTEHKTE. Polar residues predominate over residues 561 to 570; sequence APTSSAAVNA.

Belongs to the major facilitator superfamily. Sugar transporter (TC 2.A.1.1) family.

It localises to the cell membrane. Phosphate transport activity is competitively inhibited by arsenate. Functionally, high-affinity transporter for external inorganic phosphate. Acts probably as a H(+)-phosphate symporter. The chain is Repressible high-affinity phosphate permease from Neurospora crassa (strain ATCC 24698 / 74-OR23-1A / CBS 708.71 / DSM 1257 / FGSC 987).